The following is an 82-amino-acid chain: Cytochrome b559 subunit alpha (82 aa).

A helical membrane pass occupies residues 21–35 (VIHSITIPSLFIAGW). Heme is bound at residue His23.

This sequence belongs to the PsbE/PsbF family. Heterodimer of an alpha subunit and a beta subunit. PSII is composed of 1 copy each of membrane proteins PsbA, PsbB, PsbC, PsbD, PsbE, PsbF, PsbH, PsbI, PsbJ, PsbK, PsbL, PsbM, PsbT, PsbX, PsbY, PsbZ, Psb30/Ycf12, at least 3 peripheral proteins of the oxygen-evolving complex and a large number of cofactors. It forms dimeric complexes. Requires heme b as cofactor.

It localises to the plastid. Its subcellular location is the chloroplast thylakoid membrane. In terms of biological role, this b-type cytochrome is tightly associated with the reaction center of photosystem II (PSII). PSII is a light-driven water:plastoquinone oxidoreductase that uses light energy to abstract electrons from H(2)O, generating O(2) and a proton gradient subsequently used for ATP formation. It consists of a core antenna complex that captures photons, and an electron transfer chain that converts photonic excitation into a charge separation. The polypeptide is Cytochrome b559 subunit alpha (Stigeoclonium helveticum (Green alga)).